A 395-amino-acid chain; its full sequence is F-box/LRR-repeat protein 12 (395 aa).

Residues 13–61 (TSIIHLPDDCLSFIFQRLDSVADHDSFGLTCHRWLNIQNISRRSLQFQC) form the F-box domain. LRR repeat units lie at residues 75 to 100 (NPDV…SLSG), 101 to 126 (CTVL…YLDC), 127 to 152 (CFGI…SLYR), 154 to 177 (NISD…NLSY), 178 to 203 (CPLV…KISN), 226 to 250 (SCQL…NISG), 252 to 278 (SCYI…NLRM), 279 to 304 (CRTV…NLAL), 305 to 330 (CHEV…HVNR), and 331 to 356 (CRNL…YMNG).

This chain is F-box/LRR-repeat protein 12 (FBL12), found in Arabidopsis thaliana (Mouse-ear cress).